The sequence spans 207 residues: Large ribosomal subunit protein uL4 (207 aa).

Positions alanine 50–glycine 76 are disordered.

It belongs to the universal ribosomal protein uL4 family. Part of the 50S ribosomal subunit.

Its function is as follows. One of the primary rRNA binding proteins, this protein initially binds near the 5'-end of the 23S rRNA. It is important during the early stages of 50S assembly. It makes multiple contacts with different domains of the 23S rRNA in the assembled 50S subunit and ribosome. In terms of biological role, forms part of the polypeptide exit tunnel. This Macrococcus caseolyticus (strain JCSC5402) (Macrococcoides caseolyticum) protein is Large ribosomal subunit protein uL4.